The following is a 310-amino-acid chain: E3 ubiquitin-protein ligase AIP2 (310 aa).

Residues Cys-230–Arg-271 form an RING-type; atypical zinc finger. Residues Thr-276 to Glu-306 are a coiled coil. The segment covering Lys-285–Ala-298 has biased composition (basic and acidic residues). Residues Lys-285–Val-310 form a disordered region.

As to quaternary structure, interacts with ABI3 (via C-terminus). Post-translationally, auto-ubiquitinated. In terms of tissue distribution, highly expressed in leaves and at lower levels in flowers and seeds.

Its subcellular location is the nucleus. The protein resides in the cytoplasm. The enzyme catalyses S-ubiquitinyl-[E2 ubiquitin-conjugating enzyme]-L-cysteine + [acceptor protein]-L-lysine = [E2 ubiquitin-conjugating enzyme]-L-cysteine + N(6)-ubiquitinyl-[acceptor protein]-L-lysine.. It functions in the pathway protein modification; protein ubiquitination. Functionally, E3 ubiquitin-protein ligase that acts as a negative regulator of abscisic acid (ABA) signaling. Mediates ubiquitination and subsequent proteasomal degradation of the transcription factor ABI3. This is E3 ubiquitin-protein ligase AIP2 (AIP2) from Arabidopsis thaliana (Mouse-ear cress).